Consider the following 436-residue polypeptide: Probable transporter MCH1 (436 aa).

7 helical membrane-spanning segments follow: residues 27–47, 66–86, 93–113, 119–139, 155–175, 188–208, and 249–269; these read VVAF…LLFT, MISS…GYLA, LLSL…SYLV, SVIG…SLYF, LAIS…AQIL, LEVV…ASFV, and FVSF…ILNI. N-linked (GlcNAc...) asparagine glycosylation is present at Asn278. 5 helical membrane passes run 295 to 312, 325 to 345, 347 to 367, 373 to 393, and 410 to 430; these read VSIM…LGVL, LLVV…SAIL, GVSY…IWGI, TWGS…MFYG, and TAGA…IWYA.

The protein belongs to the major facilitator superfamily.

The protein localises to the vacuole membrane. Its function is as follows. Probable transporter. The chain is Probable transporter MCH1 (MCH1) from Candida albicans (strain SC5314 / ATCC MYA-2876) (Yeast).